The primary structure comprises 238 residues: Orotidine 5'-phosphate decarboxylase (238 aa).

Substrate-binding positions include Asp10, Lys32, 59-68, Thr122, Arg184, Gln193, Gly213, and Arg214; that span reads DLKLHDIPNT. Lys61 (proton donor) is an active-site residue.

Belongs to the OMP decarboxylase family. Type 1 subfamily. In terms of assembly, homodimer.

The catalysed reaction is orotidine 5'-phosphate + H(+) = UMP + CO2. The protein operates within pyrimidine metabolism; UMP biosynthesis via de novo pathway; UMP from orotate: step 2/2. Catalyzes the decarboxylation of orotidine 5'-monophosphate (OMP) to uridine 5'-monophosphate (UMP). The sequence is that of Orotidine 5'-phosphate decarboxylase from Bacillus cereus (strain ATCC 10987 / NRS 248).